The chain runs to 253 residues: CENP-A recruiting complex protein mis20 (253 aa).

A disordered region spans residues 113 to 136 (TGPTTSKNKHPSHSNTIRSPPYKV).

As to quaternary structure, component of the CENP-A recruiting complex composed of at least mis16, mis19, mis19 and mis20.

Its subcellular location is the cytoplasm. The protein localises to the cytoskeleton. The protein resides in the microtubule organizing center. It is found in the spindle pole body. It localises to the chromosome. Its subcellular location is the centromere. Component of the CENP-A recruiting complex that ensures the integrity of mitotic spindles through maintenance of kinetochore factors mis6/CENP-I and cnp1/CENP-A. Seems dispensable for proper chromosome segregation. The sequence is that of CENP-A recruiting complex protein mis20 from Schizosaccharomyces pombe (strain 972 / ATCC 24843) (Fission yeast).